The chain runs to 272 residues: MICMSRKPSPTRRTRIHRFHKGSCGRKLVGLTCYDFSTARVLSDCELDFLLVGDSASGVIYGYENTGSVCLDEIIYLAAGVVRGAPNSFIIVDLPFGTYEKSDELAVETAIEVIKRTGASAVKLEGGARMACRISAIVRAGVPVMGHIGFTPQTINALGGYKIQGRDNADLIYLDAQAVEQAGAFAVVMEMVTEDLAKTITSEIKITTIGVGAGRYTDGQLLVINDLIGLSEKKITFAPRYASIDNTVASCVKLWRKDVLEGNFPQKDHIPA.

The Mg(2+) site is built by Asp-54 and Asp-93. Residues 54–55 (DS), Asp-93, and Lys-123 each bind 3-methyl-2-oxobutanoate. Mg(2+) is bound at residue Glu-125. The active-site Proton acceptor is Glu-190.

It belongs to the PanB family. Homodecamer; pentamer of dimers. The cofactor is Mg(2+).

The protein resides in the cytoplasm. The enzyme catalyses 3-methyl-2-oxobutanoate + (6R)-5,10-methylene-5,6,7,8-tetrahydrofolate + H2O = 2-dehydropantoate + (6S)-5,6,7,8-tetrahydrofolate. Its pathway is cofactor biosynthesis; (R)-pantothenate biosynthesis; (R)-pantoate from 3-methyl-2-oxobutanoate: step 1/2. Functionally, catalyzes the reversible reaction in which hydroxymethyl group from 5,10-methylenetetrahydrofolate is transferred onto alpha-ketoisovalerate to form ketopantoate. The protein is 3-methyl-2-oxobutanoate hydroxymethyltransferase of Tropheryma whipplei (strain Twist) (Whipple's bacillus).